The sequence spans 91 residues: Small ribosomal subunit protein bS20 (91 aa).

This sequence belongs to the bacterial ribosomal protein bS20 family.

Its function is as follows. Binds directly to 16S ribosomal RNA. The polypeptide is Small ribosomal subunit protein bS20 (Caulobacter vibrioides (strain ATCC 19089 / CIP 103742 / CB 15) (Caulobacter crescentus)).